A 348-amino-acid polypeptide reads, in one-letter code: D-alanine--D-alanine ligase (348 aa).

The ATP-grasp domain occupies 132-334; it reads KQVLATVGVP…YSDLIEKLVM (203 aa). 162-217 is a binding site for ATP; that stretch reads LETLSFPIFVKPANMGSSVGISKATDESSLRSAIDLALKYDSRILIEQGVTAREIE. Positions 288, 301, and 303 each coordinate Mg(2+).

Belongs to the D-alanine--D-alanine ligase family. It depends on Mg(2+) as a cofactor. Requires Mn(2+) as cofactor.

It localises to the cytoplasm. It carries out the reaction 2 D-alanine + ATP = D-alanyl-D-alanine + ADP + phosphate + H(+). It participates in cell wall biogenesis; peptidoglycan biosynthesis. In terms of biological role, cell wall formation. This Streptococcus agalactiae serotype Ia (strain ATCC 27591 / A909 / CDC SS700) protein is D-alanine--D-alanine ligase.